Reading from the N-terminus, the 266-residue chain is Glucosamine-6-phosphate deaminase (266 aa).

Asp-72 (proton acceptor; for enolization step) is an active-site residue. Asp-141 acts as the For ring-opening step in catalysis. His-143 (proton acceptor; for ring-opening step) is an active-site residue. Glu-148 (for ring-opening step) is an active-site residue.

The protein belongs to the glucosamine/galactosamine-6-phosphate isomerase family. NagB subfamily. In terms of assembly, homohexamer.

It carries out the reaction alpha-D-glucosamine 6-phosphate + H2O = beta-D-fructose 6-phosphate + NH4(+). It participates in amino-sugar metabolism; N-acetylneuraminate degradation; D-fructose 6-phosphate from N-acetylneuraminate: step 5/5. Allosterically activated by N-acetylglucosamine 6-phosphate (GlcNAc6P). In terms of biological role, catalyzes the reversible isomerization-deamination of glucosamine 6-phosphate (GlcN6P) to form fructose 6-phosphate (Fru6P) and ammonium ion. The polypeptide is Glucosamine-6-phosphate deaminase (Cronobacter sakazakii (strain ATCC BAA-894) (Enterobacter sakazakii)).